The primary structure comprises 121 residues: Dihydroneopterin aldolase (121 aa).

Substrate contacts are provided by residues Glu-22, Tyr-54, and 73–74 (IE). Lys-100 functions as the Proton donor/acceptor in the catalytic mechanism.

Belongs to the DHNA family. Homooctamer. Four molecules assemble into a ring, and two rings come together to give a cylinder with a hole of at least 13 a diameter.

It carries out the reaction 7,8-dihydroneopterin = 6-hydroxymethyl-7,8-dihydropterin + glycolaldehyde. The enzyme catalyses 7,8-dihydroneopterin = 7,8-dihydromonapterin. Its pathway is cofactor biosynthesis; tetrahydrofolate biosynthesis; 2-amino-4-hydroxy-6-hydroxymethyl-7,8-dihydropteridine diphosphate from 7,8-dihydroneopterin triphosphate: step 3/4. Catalyzes the conversion of 7,8-dihydroneopterin to 6-hydroxymethyl-7,8-dihydropterin. Can also catalyze the epimerization of carbon 2' of dihydroneopterin to dihydromonapterin. In Staphylococcus epidermidis (strain ATCC 35984 / DSM 28319 / BCRC 17069 / CCUG 31568 / BM 3577 / RP62A), this protein is Dihydroneopterin aldolase (folB).